The sequence spans 98 residues: Putative pterin-4-alpha-carbinolamine dehydratase (98 aa).

Belongs to the pterin-4-alpha-carbinolamine dehydratase family.

It catalyses the reaction (4aS,6R)-4a-hydroxy-L-erythro-5,6,7,8-tetrahydrobiopterin = (6R)-L-erythro-6,7-dihydrobiopterin + H2O. The sequence is that of Putative pterin-4-alpha-carbinolamine dehydratase from Roseobacter denitrificans (strain ATCC 33942 / OCh 114) (Erythrobacter sp. (strain OCh 114)).